Reading from the N-terminus, the 193-residue chain is Imidazoleglycerol-phosphate dehydratase (193 aa).

This sequence belongs to the imidazoleglycerol-phosphate dehydratase family.

It is found in the cytoplasm. It catalyses the reaction D-erythro-1-(imidazol-4-yl)glycerol 3-phosphate = 3-(imidazol-4-yl)-2-oxopropyl phosphate + H2O. The protein operates within amino-acid biosynthesis; L-histidine biosynthesis; L-histidine from 5-phospho-alpha-D-ribose 1-diphosphate: step 6/9. This chain is Imidazoleglycerol-phosphate dehydratase (hisB), found in Saccharolobus solfataricus (strain ATCC 35092 / DSM 1617 / JCM 11322 / P2) (Sulfolobus solfataricus).